A 396-amino-acid chain; its full sequence is Mannonate dehydratase (396 aa).

This sequence belongs to the mannonate dehydratase family. Fe(2+) serves as cofactor. Mn(2+) is required as a cofactor.

It catalyses the reaction D-mannonate = 2-dehydro-3-deoxy-D-gluconate + H2O. Its pathway is carbohydrate metabolism; pentose and glucuronate interconversion. Its function is as follows. Catalyzes the dehydration of D-mannonate. This chain is Mannonate dehydratase, found in Serratia proteamaculans (strain 568).